Reading from the N-terminus, the 383-residue chain is Probable endopolygalacturonase C (383 aa).

The signal sequence occupies residues 1–16; the sequence is MVRQLILISSLLAAVA. The propeptide occupies 17-40; it reads VRAPADPAHPMVTEAPDVNLVEKR. Cys44 and Cys62 are disulfide-bonded. PbH1 repeat units lie at residues 175–206 and 207–228; these read STDL…DIGE and STYI…AINS. The Proton donor role is filled by Asp221. A disulfide bridge connects residues Cys223 and Cys239. His243 is an active-site residue. PbH1 repeat units lie at residues 253-279 and 287-309; these read RDDN…RIKT and VSEV…VIEQ. Asn260 carries an N-linked (GlcNAc...) asparagine glycan. 2 disulfide bridges follow: Cys348–Cys353 and Cys372–Cys381.

Belongs to the glycosyl hydrolase 28 family.

The protein resides in the secreted. The enzyme catalyses (1,4-alpha-D-galacturonosyl)n+m + H2O = (1,4-alpha-D-galacturonosyl)n + (1,4-alpha-D-galacturonosyl)m.. Functionally, involved in maceration and soft-rotting of plant tissue. Hydrolyzes the 1,4-alpha glycosidic bonds of de-esterified pectate in the smooth region of the plant cell wall. The protein is Probable endopolygalacturonase C (pgaC) of Aspergillus niger.